Here is a 472-residue protein sequence, read N- to C-terminus: 3beta,22alpha-dihydroxysteroid 3-dehydrogenase (472 aa).

Residues 1 to 21 traverse the membrane as a helical segment; that stretch reads MAFTAFLLLLSSIAAGFLLLL. Heme is bound at residue cysteine 418.

This sequence belongs to the cytochrome P450 family. Requires heme as cofactor.

The protein localises to the membrane. The enzyme catalyses (22S)-22-hydroxycampesterol + reduced [NADPH--hemoprotein reductase] + O2 = (22S)-22-hydroxycampest-4-en-3-one + oxidized [NADPH--hemoprotein reductase] + 2 H2O + H(+). It catalyses the reaction 6-deoxoteasterone + reduced [NADPH--hemoprotein reductase] + O2 = 3-dehydro-6-deoxoteasterone + oxidized [NADPH--hemoprotein reductase] + 2 H2O + H(+). It carries out the reaction 6-deoxycathasterone + reduced [NADPH--hemoprotein reductase] + O2 = (22S,24R)-22-hydroxy-5alpha-ergostan-3-one + oxidized [NADPH--hemoprotein reductase] + 2 H2O + H(+). The catalysed reaction is (22R,23R)-22,23-dihydroxycampesterol + reduced [NADPH--hemoprotein reductase] + O2 = (22R,23R)-22,23-dihydroxycampest-4-en-3-one + oxidized [NADPH--hemoprotein reductase] + 2 H2O + H(+). It functions in the pathway plant hormone biosynthesis; brassinosteroid biosynthesis. In terms of biological role, catalyzes C3-oxidation steps in brassinosteroids biosynthesis. Converts (22S)-22-hydroxycampesterol (22-OHCR) to (22S,24R)-22-hydroxyergost-4-en-3-one (22-hydroxy-campesta-4-en-3-one, 22-OH-4-en-3-one), 6-deoxocathasterone (6-deoxoCT) to (22S,24R)-22-hydroxy-5alpha-ergostan-3-one (22-hydroxy-campesta-3-one, 22-OH-3-one), (22R,23R)-22,23-dihydroxycampesterol (22,23-diOHCR) to (22R,23R)-22,23-dihydroxy-campest-4-en-3-one (22,23-diOH-4-en-3-one), and 6-deoxoteasterone (6-deoxoTE) to 3-dehydro-6-deoxoteasterone (6-deoxo3DT, 6-deoxo-3-DHT). In Arabidopsis thaliana (Mouse-ear cress), this protein is 3beta,22alpha-dihydroxysteroid 3-dehydrogenase.